Consider the following 511-residue polypeptide: Histidine ammonia-lyase (511 aa).

The 5-imidazolinone (Ala-Gly) cross-link spans A142–G144. S143 carries the 2,3-didehydroalanine (Ser) modification.

This sequence belongs to the PAL/histidase family. In terms of processing, contains an active site 4-methylidene-imidazol-5-one (MIO), which is formed autocatalytically by cyclization and dehydration of residues Ala-Ser-Gly.

The protein resides in the cytoplasm. The catalysed reaction is L-histidine = trans-urocanate + NH4(+). It participates in amino-acid degradation; L-histidine degradation into L-glutamate; N-formimidoyl-L-glutamate from L-histidine: step 1/3. This chain is Histidine ammonia-lyase, found in Phenylobacterium zucineum (strain HLK1).